The chain runs to 351 residues: Dihydroorotate dehydrogenase (quinone) (351 aa).

FMN-binding positions include 65–69 (AGLDK) and Thr-89. Residue Lys-69 participates in substrate binding. 114-118 (NRLGF) contacts substrate. FMN is bound by residues Asn-150 and Asn-183. Substrate is bound at residue Asn-183. Ser-186 functions as the Nucleophile in the catalytic mechanism. Asn-188 lines the substrate pocket. Residues Lys-228 and Thr-256 each coordinate FMN. 257–258 (NT) contributes to the substrate binding site. Residues Gly-279, Gly-308, and 329-330 (YT) each bind FMN.

It belongs to the dihydroorotate dehydrogenase family. Type 2 subfamily. In terms of assembly, monomer. FMN serves as cofactor.

The protein localises to the cell membrane. The catalysed reaction is (S)-dihydroorotate + a quinone = orotate + a quinol. The protein operates within pyrimidine metabolism; UMP biosynthesis via de novo pathway; orotate from (S)-dihydroorotate (quinone route): step 1/1. Catalyzes the conversion of dihydroorotate to orotate with quinone as electron acceptor. The protein is Dihydroorotate dehydrogenase (quinone) of Acidovorax sp. (strain JS42).